Reading from the N-terminus, the 157-residue chain is Cyclic pyranopterin monophosphate synthase (157 aa).

Residues 73 to 75 (LCH) and 110 to 111 (ME) contribute to the substrate site. The active site involves D125.

This sequence belongs to the MoaC family. As to quaternary structure, homohexamer; trimer of dimers.

It catalyses the reaction (8S)-3',8-cyclo-7,8-dihydroguanosine 5'-triphosphate = cyclic pyranopterin phosphate + diphosphate. The protein operates within cofactor biosynthesis; molybdopterin biosynthesis. Its function is as follows. Catalyzes the conversion of (8S)-3',8-cyclo-7,8-dihydroguanosine 5'-triphosphate to cyclic pyranopterin monophosphate (cPMP). This chain is Cyclic pyranopterin monophosphate synthase, found in Pseudomonas fluorescens (strain SBW25).